The chain runs to 160 residues: Nucleotide-binding protein CPS_1098 (160 aa).

The protein belongs to the YajQ family.

In terms of biological role, nucleotide-binding protein. The sequence is that of Nucleotide-binding protein CPS_1098 from Colwellia psychrerythraea (strain 34H / ATCC BAA-681) (Vibrio psychroerythus).